The primary structure comprises 387 residues: Zinc finger protein neuro-d4 (387 aa).

Glycyl lysine isopeptide (Lys-Gly) (interchain with G-Cter in SUMO2) cross-links involve residues Lys106, Lys129, and Lys133. The segment at 195 to 218 (YVCDICGKRYKNRPGLSYHYTHTH) adopts a C2H2-type zinc-finger fold. PHD-type zinc fingers lie at residues 271 to 328 (NGYC…CKSC) and 325 to 375 (CKSC…CLRH). Residues Cys274, Cys277, Cys293, Cys296, His301, Cys304, Cys322, Cys325, Cys328, Cys331, Cys343, Cys346, His351, Cys354, Cys369, and Cys372 each coordinate Zn(2+).

Belongs to the requiem/DPF family. In terms of assembly, component of neuron-specific chromatin remodeling complex (nBAF complex) composed of at least, ARID1A/BAF250A or ARID1B/BAF250B, SMARCD1/BAF60A, SMARCD3/BAF60C, SMARCA2/BRM/BAF190B, SMARCA4/BRG1/BAF190A, SMARCB1/BAF47, SMARCC1/BAF155, SMARCE1/BAF57, SMARCC2/BAF170, DPF1/BAF45B, DPF3/BAF45C, ACTL6B/BAF53B and actin.

The protein resides in the cytoplasm. It is found in the nucleus. Its function is as follows. May have an important role in developing neurons by participating in regulation of cell survival, possibly as a neurospecific transcription factor. Belongs to the neuron-specific chromatin remodeling complex (nBAF complex). During neural development a switch from a stem/progenitor to a postmitotic chromatin remodeling mechanism occurs as neurons exit the cell cycle and become committed to their adult state. The transition from proliferating neural stem/progenitor cells to postmitotic neurons requires a switch in subunit composition of the npBAF and nBAF complexes. As neural progenitors exit mitosis and differentiate into neurons, npBAF complexes which contain ACTL6A/BAF53A and PHF10/BAF45A, are exchanged for homologous alternative ACTL6B/BAF53B and DPF1/BAF45B or DPF3/BAF45C subunits in neuron-specific complexes (nBAF). The npBAF complex is essential for the self-renewal/proliferative capacity of the multipotent neural stem cells. The nBAF complex along with CREST plays a role regulating the activity of genes essential for dendrite growth. This is Zinc finger protein neuro-d4 from Homo sapiens (Human).